The sequence spans 552 residues: 5'-AMP-activated protein kinase catalytic subunit alpha-2 (552 aa).

The 253-residue stretch at 16–268 folds into the Protein kinase domain; the sequence is YVLGDTLGVG…IKDIREHEWF (253 aa). ATP-binding positions include 22–30 and Lys45; that span reads LGVGTFGKV. The Proton acceptor role is filled by Asp139. Thr172 is modified (phosphothreonine; by LKB1 and CaMKK2). Position 258 is a phosphothreonine (Thr258). An AIS region spans residues 291–376; that stretch reads EAVKEVCEKF…PERMPPLIAD (86 aa). A phosphoserine mark is found at Ser377 and Ser491.

It belongs to the protein kinase superfamily. CAMK Ser/Thr protein kinase family. SNF1 subfamily. As to quaternary structure, AMPK is a heterotrimer of an alpha catalytic subunit (PRKAA1 or PRKAA2), a beta (PRKAB1 or PRKAB2) and a gamma non-catalytic subunits (PRKAG1, PRKAG2 or PRKAG3). Interacts with FNIP1 and FNIP2. Interacts with DUSP29. Interacts with ARF6. The phosphorylated form at Thr-172 mediated by CamKK2 interacts with ACSS2. It depends on Mg(2+) as a cofactor. Ubiquitinated. Post-translationally, phosphorylated at Thr-172 by STK11/LKB1 in complex with STE20-related adapter-alpha (STRADA) pseudo kinase and CAB39. Also phosphorylated at Thr-172 by CAMKK2; triggered by a rise in intracellular calcium ions, without detectable changes in the AMP/ATP ratio. CAMKK1 can also phosphorylate Thr-172, but at much lower level. Dephosphorylated by protein phosphatase 2A and 2C (PP2A and PP2C). Phosphorylated by ULK1; leading to negatively regulate AMPK activity and suggesting the existence of a regulatory feedback loop between ULK1 and AMPK. Dephosphorylated by PPM1A and PPM1B at Thr-172 (mediated by STK11/LKB1).

The protein localises to the cytoplasm. The protein resides in the nucleus. It carries out the reaction L-seryl-[protein] + ATP = O-phospho-L-seryl-[protein] + ADP + H(+). The enzyme catalyses L-threonyl-[protein] + ATP = O-phospho-L-threonyl-[protein] + ADP + H(+). It catalyses the reaction L-seryl-[acetyl-CoA carboxylase] + ATP = O-phospho-L-seryl-[acetyl-CoA carboxylase] + ADP + H(+). The catalysed reaction is L-seryl-[3-hydroxy-3-methylglutaryl-coenzyme A reductase] + ATP = O-phospho-L-seryl-[3-hydroxy-3-methylglutaryl-coenzyme A reductase] + ADP + H(+). Activated by phosphorylation on Thr-172. Binding of AMP to non-catalytic gamma subunit (PRKAG1, PRKAG2 or PRKAG3) results in allosteric activation, inducing phosphorylation on Thr-172. AMP-binding to gamma subunit also sustains activity by preventing dephosphorylation of Thr-172. ADP also stimulates Thr-172 phosphorylation, without stimulating already phosphorylated AMPK. ATP promotes dephosphorylation of Thr-172, rendering the enzyme inactive. Under physiological conditions AMPK mainly exists in its inactive form in complex with ATP, which is much more abundant than AMP. Selectively inhibited by compound C (6-[4-(2-Piperidin-1-yl-ethoxy)-phenyl)]-3-pyridin-4-yl-pyyrazolo[1,5-a] pyrimidine. Activated by resveratrol, a natural polyphenol present in red wine, and S17834, a synthetic polyphenol. Salicylate/aspirin directly activates kinase activity, primarily by inhibiting Thr-172 dephosphorylation. In terms of biological role, catalytic subunit of AMP-activated protein kinase (AMPK), an energy sensor protein kinase that plays a key role in regulating cellular energy metabolism. In response to reduction of intracellular ATP levels, AMPK activates energy-producing pathways and inhibits energy-consuming processes: inhibits protein, carbohydrate and lipid biosynthesis, as well as cell growth and proliferation. AMPK acts via direct phosphorylation of metabolic enzymes, and by longer-term effects via phosphorylation of transcription regulators. Regulates lipid synthesis by phosphorylating and inactivating lipid metabolic enzymes such as ACACA, ACACB, GYS1, HMGCR and LIPE; regulates fatty acid and cholesterol synthesis by phosphorylating acetyl-CoA carboxylase (ACACA and ACACB) and hormone-sensitive lipase (LIPE) enzymes, respectively. Promotes lipolysis of lipid droplets by mediating phosphorylation of isoform 1 of CHKA (CHKalpha2). Regulates insulin-signaling and glycolysis by phosphorylating IRS1, PFKFB2 and PFKFB3. Involved in insulin receptor/INSR internalization. AMPK stimulates glucose uptake in muscle by increasing the translocation of the glucose transporter SLC2A4/GLUT4 to the plasma membrane, possibly by mediating phosphorylation of TBC1D4/AS160. Regulates transcription and chromatin structure by phosphorylating transcription regulators involved in energy metabolism such as CRTC2/TORC2, FOXO3, histone H2B, HDAC5, MEF2C, MLXIPL/ChREBP, EP300, HNF4A, p53/TP53, SREBF1, SREBF2 and PPARGC1A. Acts as a key regulator of glucose homeostasis in liver by phosphorylating CRTC2/TORC2, leading to CRTC2/TORC2 sequestration in the cytoplasm. In response to stress, phosphorylates 'Ser-36' of histone H2B (H2BS36ph), leading to promote transcription. Acts as a key regulator of cell growth and proliferation by phosphorylating FNIP1, TSC2, RPTOR, WDR24 and ATG1/ULK1: in response to nutrient limitation, negatively regulates the mTORC1 complex by phosphorylating RPTOR component of the mTORC1 complex and by phosphorylating and activating TSC2. Also phosphorylates and inhibits GATOR2 subunit WDR24 in response to nutrient limitation, leading to suppress glucose-mediated mTORC1 activation. In response to energetic stress, phosphorylates FNIP1, inactivating the non-canonical mTORC1 signaling, thereby promoting nuclear translocation of TFEB and TFE3, and inducing transcription of lysosomal or autophagy genes. In response to nutrient limitation, promotes autophagy by phosphorylating and activating ATG1/ULK1. In that process, it also activates WDR45/WIPI4. Phosphorylates CASP6, thereby preventing its autoprocessing and subsequent activation. AMPK also acts as a regulator of circadian rhythm by mediating phosphorylation of CRY1, leading to destabilize it. May regulate the Wnt signaling pathway by phosphorylating CTNNB1, leading to stabilize it. Also acts as a regulator of cellular polarity by remodeling the actin cytoskeleton; probably by indirectly activating myosin. Also phosphorylates CFTR, EEF2K, KLC1, NOS3 and SLC12A1. Plays an important role in the differential regulation of pro-autophagy (composed of PIK3C3, BECN1, PIK3R4 and UVRAG or ATG14) and non-autophagy (composed of PIK3C3, BECN1 and PIK3R4) complexes, in response to glucose starvation. Can inhibit the non-autophagy complex by phosphorylating PIK3C3 and can activate the pro-autophagy complex by phosphorylating BECN1. Upon glucose starvation, promotes ARF6 activation in a kinase-independent manner leading to cell migration. Upon glucose deprivation mediates the phosphorylation of ACSS2 at 'Ser-659', which exposes the nuclear localization signal of ACSS2, required for its interaction with KPNA1 and nuclear translocation. Upon stress, regulates mitochondrial fragmentation through phosphorylation of MTFR1L. The sequence is that of 5'-AMP-activated protein kinase catalytic subunit alpha-2 from Mus musculus (Mouse).